Here is a 183-residue protein sequence, read N- to C-terminus: ATP synthase subunit b, chloroplastic (183 aa).

The chain crosses the membrane as a helical span at residues 25–45 (DILATNLINLTVVVGVLIFFG).

This sequence belongs to the ATPase B chain family. F-type ATPases have 2 components, F(1) - the catalytic core - and F(0) - the membrane proton channel. F(1) has five subunits: alpha(3), beta(3), gamma(1), delta(1), epsilon(1). F(0) has four main subunits: a(1), b(1), b'(1) and c(10-14). The alpha and beta chains form an alternating ring which encloses part of the gamma chain. F(1) is attached to F(0) by a central stalk formed by the gamma and epsilon chains, while a peripheral stalk is formed by the delta, b and b' chains.

It is found in the plastid. The protein resides in the chloroplast thylakoid membrane. Its function is as follows. F(1)F(0) ATP synthase produces ATP from ADP in the presence of a proton or sodium gradient. F-type ATPases consist of two structural domains, F(1) containing the extramembraneous catalytic core and F(0) containing the membrane proton channel, linked together by a central stalk and a peripheral stalk. During catalysis, ATP synthesis in the catalytic domain of F(1) is coupled via a rotary mechanism of the central stalk subunits to proton translocation. In terms of biological role, component of the F(0) channel, it forms part of the peripheral stalk, linking F(1) to F(0). This Saccharum hybrid (Sugarcane) protein is ATP synthase subunit b, chloroplastic.